The following is a 484-amino-acid chain: 6-phosphogluconate dehydrogenase, decarboxylating (484 aa).

NADP(+) is bound by residues 10 to 15, 33 to 35, 75 to 77, and N103; these read GLAVMG, NRT, and IKA. Residues N103 and 129 to 131 each bind substrate; that span reads SGG. Catalysis depends on K183, which acts as the Proton acceptor. Residue 186–187 coordinates substrate; that stretch reads HN. Residue E190 is the Proton donor of the active site. The substrate site is built by Y191, K260, R287, R448, and H454.

This sequence belongs to the 6-phosphogluconate dehydrogenase family. In terms of assembly, homodimer.

The catalysed reaction is 6-phospho-D-gluconate + NADP(+) = D-ribulose 5-phosphate + CO2 + NADPH. It functions in the pathway carbohydrate degradation; pentose phosphate pathway; D-ribulose 5-phosphate from D-glucose 6-phosphate (oxidative stage): step 3/3. Its function is as follows. Catalyzes the oxidative decarboxylation of 6-phosphogluconate to ribulose 5-phosphate and CO(2), with concomitant reduction of NADP to NADPH. The sequence is that of 6-phosphogluconate dehydrogenase, decarboxylating from Caenorhabditis elegans.